A 508-amino-acid chain; its full sequence is O-acetyltransferase pigM (508 aa).

The disordered stretch occupies residues 166–188; that stretch reads TPAPDERGKISPSLEDAAGSPRT.

The protein operates within secondary metabolite biosynthesis. O-acetyltransferase; part of the gene cluster that mediates the biosynthesis of azaphilone pigments (MonAzPs), a complex mixture of compounds with a common azaphilone skeleton very widely used as food colorants. PigM and pigO are involved in the elimination of the omega-1 alcohol with pigM acting as an O-acetyltransferase that synthesizes the O-11 acetyl intermediate whereas pigO eliminates acetic acid to yield an intermediate with a C10(11) double bond. The first step of the pathway is performed by the nrPKS pigA that forms the hexaketide precursor from successive condensations of five malonyl-CoA units, with a simple acetyl-CoA starter unit. The role of esterase pigG is not clear, but it may play at most a supplementary role in the formation of the benzaldehyde produced by the pigA nrPKS. This very reactive benzaldehyde is intercepted by the pigC ketoreductase that to provide the first stable enzyme-free MonAzPs intermediate, 6-(4-hydroxy-2-oxopentyl)-3-methyl-2,4-dioxocyclohexane carbaldehyde, also known as M7PKS-1. The FAD-dependent monooxygenase pigN hydroxylates M7PKS-1 at C-4, which triggers the formation of the pyran ring. PigJ, pigK and pigD are involved in the acetylation of the pyran ring. PigJ and pigK form the two subunits of a dedicated fungal FAS that produces the side chain fatty acyl moiety of MonAzPs and pigD transfers the fatty acyl chain to the C-4 alcohol. PigM and pigO are involved in the elimination of the omega-1 alcohol. PigM acts as an O-acetyltransferase that synthesizes the putative O-11 acetyl intermediate whereas pigO eliminates acetic acid to yield an intermediate with a C10(11) double bond. The dehydration of the C-11 alcohol followed by the reduction of the C6(7) double bond by the NAD(P)H-dependent oxidoreductase pigE increases the electrophilicity of the C-5 ketone of the resulting acyl benzopyran. This in turn sets up the C-5 ketone for an intramolecular Knoevenagel aldol condensation with the C-20 enol of the side chain. This condensation affords the characteristic linear tricyclic carbon skeletons of the yellow pigments that serve as the common precursors for the classical yellow pigments monascin and ankaflavin, orange pigments rubopunctatin and monascorubrin, and red pigments ribropunctamine and monascorubramine. The FAD-dependent oxidoreductase pigF is especially invoved in the biosynthesis of orange and red pigments via desaturation of C6(7). The chain is O-acetyltransferase pigM from Monascus ruber (Mold).